Consider the following 148-residue polypeptide: Auxin-responsive protein SAUR65 (148 aa).

This sequence belongs to the ARG7 family.

Its subcellular location is the cell membrane. In terms of biological role, may promote auxin-stimulated organ elongation, such as hypocotyls, stamen filaments and petals. This Arabidopsis thaliana (Mouse-ear cress) protein is Auxin-responsive protein SAUR65.